We begin with the raw amino-acid sequence, 441 residues long: Squalene synthase (441 aa).

A run of 2 helical transmembrane segments spans residues 293–313 (SFQFCAIPQVMAIATLALVFG) and 420–440 (FKFNVLLSILFTVFGALYWYA).

Belongs to the phytoene/squalene synthase family. Mg(2+) is required as a cofactor.

The protein localises to the endoplasmic reticulum membrane. The catalysed reaction is 2 (2E,6E)-farnesyl diphosphate + NADPH + H(+) = squalene + 2 diphosphate + NADP(+). It catalyses the reaction 2 (2E,6E)-farnesyl diphosphate + NADH + H(+) = squalene + 2 diphosphate + NAD(+). It functions in the pathway terpene metabolism; lanosterol biosynthesis; lanosterol from farnesyl diphosphate: step 1/3. Catalyzes the condensation of 2 two farnesyl pyrophosphate moieties to form squalene. It is the first committed enzyme of the sterol biosynthesis pathway. Required for the biosynthesis of ergosterol. This is Squalene synthase (ERG9) from Eremothecium gossypii (strain ATCC 10895 / CBS 109.51 / FGSC 9923 / NRRL Y-1056) (Yeast).